A 74-amino-acid polypeptide reads, in one-letter code: Large ribosomal subunit protein bL31 (74 aa).

The Zn(2+) site is built by C16, C18, C38, and C41.

It belongs to the bacterial ribosomal protein bL31 family. Type A subfamily. Part of the 50S ribosomal subunit. Zn(2+) serves as cofactor.

Binds the 23S rRNA. This Acinetobacter baylyi (strain ATCC 33305 / BD413 / ADP1) protein is Large ribosomal subunit protein bL31.